Here is a 120-residue protein sequence, read N- to C-terminus: uncharacterized protein (120 aa).

The N-terminal stretch at 1-19 is a signal peptide; sequence MKKIVCAVVALLLTLPAWA.

This is an uncharacterized protein from Salmonella typhimurium (strain LT2 / SGSC1412 / ATCC 700720).